A 541-amino-acid polypeptide reads, in one-letter code: Solute carrier family 2, facilitated glucose transporter member 10 (541 aa).

Residues 1–15 lie on the Cytoplasmic side of the membrane; sequence MGHSPPVLPLCASVS. A helical membrane pass occupies residues 16-36; that stretch reads LLGGLTFGYELAVISGALLPL. At 37-48 the chain is on the extracellular side; the sequence is QLDFGLSCLEQE. A helical membrane pass occupies residues 49–69; that stretch reads FLVGSLLLGALLASLVGGFLI. At 70 to 77 the chain is on the cytoplasmic side; sequence DCYGRKQA. The chain crosses the membrane as a helical span at residues 78–98; that stretch reads ILGSNLVLLAGSLTLGLAGSL. The Extracellular segment spans residues 99-106; it reads AWLVLGRA. The chain crosses the membrane as a helical span at residues 107–127; the sequence is VVGFAISLSSMACCIYVSELV. At 128–134 the chain is on the cytoplasmic side; the sequence is GPRQRGV. A helical membrane pass occupies residues 135 to 155; the sequence is LVSLYEAGITVGILLSYALNY. Residues 156 to 166 lie on the Extracellular side of the membrane; sequence ALAGTPWGWRH. Residues 167 to 187 traverse the membrane as a helical segment; sequence MFGWATAPAVLQSLSLLFLPA. At 188-233 the chain is on the cytoplasmic side; that stretch reads GTDETATHKDLIPLQGGEAPKLGPGRPRYSFLDLFRARDNMRGRTT. A helical transmembrane segment spans residues 234-254; the sequence is VGLGLVLFQQLTGQPNVLCYA. 242–243 contributes to the D-glucose binding site; the sequence is QQ. Residues 255-269 are Extracellular-facing; sequence STIFSSVGFHGGSSA. The helical transmembrane segment at 270 to 290 threads the bilayer; sequence VLASVGLGAVKVAATLTAMGL. Topologically, residues 291 to 298 are cytoplasmic; the sequence is VDRAGRRA. Residues 299–319 form a helical membrane-spanning segment; it reads LLLAGCALMALSVSGIGLVSF. Residues 320–414 lie on the Extracellular side of the membrane; that stretch reads AVPMDSGPSC…HALLRWTALL (95 aa). N-linked (GlcNAc...) asparagine glycosylation occurs at N334. A disordered region spans residues 340-388; sequence GLPGDSGLLQDSSLPPIPRTNEDQREPILSTAKKTKPHPRSGDPSAPPR. The helical transmembrane segment at 415–435 threads the bilayer; sequence CLMVFVSAFSFGFGPVTWLVL. Position 432 (W432) interacts with D-glucose. At 436–445 the chain is on the cytoplasmic side; it reads SEIYPVEIRG. A helical membrane pass occupies residues 446–466; sequence RAFAFCNSFNWAANLFISLSF. Residues 467–476 are Extracellular-facing; that stretch reads LDLIGTIGLS. A helical transmembrane segment spans residues 477–497; it reads WTFLLYGLTAVLGLGFIYLFV. Residues 498–541 are Cytoplasmic-facing; the sequence is PETKGQSLAEIDQQFQKRRFTLSFGHRQNSTGIPYSRIEISAAS.

It belongs to the major facilitator superfamily. Sugar transporter (TC 2.A.1.1) family. Glucose transporter subfamily. As to expression, widely expressed; highest levels in liver and pancreas.

The protein localises to the endomembrane system. The protein resides in the cytoplasm. It is found in the perinuclear region. The catalysed reaction is D-glucose(out) = D-glucose(in). In terms of biological role, facilitative glucose transporter required for the development of the cardiovascular system. The sequence is that of Solute carrier family 2, facilitated glucose transporter member 10 from Homo sapiens (Human).